A 326-amino-acid chain; its full sequence is tRNA-modifying protein YgfZ (326 aa).

Folate is bound by residues tryptophan 27 and tryptophan 189.

This sequence belongs to the tRNA-modifying YgfZ family.

It is found in the cytoplasm. Functionally, folate-binding protein involved in regulating the level of ATP-DnaA and in the modification of some tRNAs. It is probably a key factor in regulatory networks that act via tRNA modification, such as initiation of chromosomal replication. This Escherichia coli O6:H1 (strain CFT073 / ATCC 700928 / UPEC) protein is tRNA-modifying protein YgfZ.